The sequence spans 178 residues: ATP synthase subunit delta (178 aa).

Belongs to the ATPase delta chain family. As to quaternary structure, F-type ATPases have 2 components, F(1) - the catalytic core - and F(0) - the membrane proton channel. F(1) has five subunits: alpha(3), beta(3), gamma(1), delta(1), epsilon(1). F(0) has three main subunits: a(1), b(2) and c(10-14). The alpha and beta chains form an alternating ring which encloses part of the gamma chain. F(1) is attached to F(0) by a central stalk formed by the gamma and epsilon chains, while a peripheral stalk is formed by the delta and b chains.

It is found in the cell membrane. In terms of biological role, f(1)F(0) ATP synthase produces ATP from ADP in the presence of a proton or sodium gradient. F-type ATPases consist of two structural domains, F(1) containing the extramembraneous catalytic core and F(0) containing the membrane proton channel, linked together by a central stalk and a peripheral stalk. During catalysis, ATP synthesis in the catalytic domain of F(1) is coupled via a rotary mechanism of the central stalk subunits to proton translocation. Its function is as follows. This protein is part of the stalk that links CF(0) to CF(1). It either transmits conformational changes from CF(0) to CF(1) or is implicated in proton conduction. This chain is ATP synthase subunit delta, found in Streptococcus pyogenes serotype M4 (strain MGAS10750).